A 299-amino-acid polypeptide reads, in one-letter code: Leucine zipper transcription factor-like protein 1 (299 aa).

The interval 145–299 is interaction with BSS9; that stretch reads GTTELLNKEI…KRLAKYESED (155 aa). The stretch at 145 to 299 forms a coiled coil; it reads GTTELLNKEI…KRLAKYESED (155 aa).

Belongs to the LZTFL1 family. Self-associates. Interacts with BBS9; the interaction mediates the association of LZTL1 with the BBsome complex and regulates BBSome ciliary trafficking.

The protein localises to the cytoplasm. In terms of biological role, regulates ciliary localization of the BBSome complex. Together with the BBSome complex, controls SMO ciliary trafficking and contributes to the sonic hedgehog (SHH) pathway regulation. May play a role in neurite outgrowth. May have tumor suppressor function. This Rattus norvegicus (Rat) protein is Leucine zipper transcription factor-like protein 1 (Lztfl1).